A 762-amino-acid chain; its full sequence is Probable disease resistance protein At1g61300 (762 aa).

Glycine 2 carries the N-myristoyl glycine lipid modification. Residues cysteine 3 and cysteine 4 are each lipidated (S-palmitoyl cysteine). The NB-ARC domain maps to 26–329 (NINRNSFGVE…CEGFIGEDQV (304 aa)). Position 68 to 75 (68 to 75 (GMGGVGKT)) interacts with ATP. 5 LRR repeats span residues 401–422 (AVRR…SKCS), 423–444 (ELTT…FIRY), 447–470 (KLVV…SGLV), 471–493 (SLQF…KKLK), and 494–516 (KLTF…SRLL).

The protein belongs to the disease resistance NB-LRR family.

Its subcellular location is the cell membrane. Its function is as follows. Probable disease resistance protein. This is Probable disease resistance protein At1g61300 from Arabidopsis thaliana (Mouse-ear cress).